The chain runs to 55 residues: Preprotein translocase subunit SecG (55 aa).

Over 1 to 29 the chain is Cytoplasmic; that stretch reads MAKKSGSGLQSSAGLMRYYEADKNAVQVQ. The chain crosses the membrane as a helical span at residues 30–51; the sequence is PKVVLIVGAIVGIAVLFLSAVN. At 52–55 the chain is on the extracellular side; sequence GFWP.

The protein belongs to the SEC61-beta family. Component of the protein translocase complex. Heterotrimer consisting of alpha (SecY), beta (SecG) and gamma (SecE) subunits. Can form oligomers of the heterotrimer.

It is found in the cell membrane. Its function is as follows. Involved in protein export. The function of the beta subunit is unknown, but it may be involved in stabilization of the trimeric complex. This is Preprotein translocase subunit SecG from Methanosarcina barkeri (strain Fusaro / DSM 804).